We begin with the raw amino-acid sequence, 204 residues long: Carbon disulfide hydrolase (204 aa).

Positions 35, 88, and 91 each coordinate Zn(2+).

It belongs to the beta-class carbonic anhydrase family. As to quaternary structure, forms a hexadecameric catenane homooligomer, through interactions of two interlocked octameric rings. Requires Zn(2+) as cofactor.

It catalyses the reaction carbon disulfide + 2 H2O = 2 hydrogen sulfide + CO2 + 2 H(+). It functions in the pathway sulfur metabolism; hydrogen sulfide biosynthesis. Functionally, catalyzes the conversion of carbon disulfide into hydrogen sulfide and carbon dioxide, with carbonyl sulfide as an intermediate. Likely plays a key role in sulfur metabolism in S.solfataricus. Does not show carbonic anhydrase activity (hydration of CO(2) to carbonate). This chain is Carbon disulfide hydrolase, found in Saccharolobus solfataricus (strain ATCC 35092 / DSM 1617 / JCM 11322 / P2) (Sulfolobus solfataricus).